A 604-amino-acid chain; its full sequence is MAKIKKRGVSGNAKNFITRTQAVKKLQVSLSDFRRLCIFKGIYPREPRNKKKANKGSTAPVTFYYAKDIQYLSHEPVLAKFREHKTFAKKLQRALGRGEVSDAQKLEANRPKYTLEHIIKERYPTFLDALRDIDDPLNMLFLFANMPATDKVSHRVTKEAEKLTNQWLAYVAKERLIKKVFVSIKGVYYQANVKGQEIRWLVPFKFPTNIPTDVDFRIMLTFLEFYSTLLHFVLYRLYNDSNLIYPPTIDIEKLKGIGGLSSYVLQSKDQGVSALLPQDKKIVEDDVSVQGKELSTANISKALEADNEGEEHEEVEQETVENVELDKFEASATKTAVDSLVQPSKYASPTSTLFSKFIFYVGREVPLDILELCILSCGGSVVSEVALDDLKTNSPDAYKKLDLSNITHQIIDRPKILQKVAGRTYIQPQWIFDCINKSELLPVNKYAPGETLPPHLSPWGDAGSYNPEAEKVDQSENAEEEEEDEVDEDDEDADEDEEDEEEEDEEEDEDLKAQKELELEAAGVKFSEIAEKEKKAAKKASKKRPAEEDEEKELKKIMMTNKQRKLYKKMQYGIDKKETRTQELAKKKRKIEKTKAQLDKLSKK.

The BRCT domain maps to 349–448; the sequence is PTSTLFSKFI…ELLPVNKYAP (100 aa). Disordered regions lie at residues 452–562 and 579–604; these read LPPH…MTNK and TRTQELAKKKRKIEKTKAQLDKLSKK. Coiled-coil stretches lie at residues 468 to 522 and 573 to 604; these read EAEK…LEAA and GIDKKETRTQELAKKKRKIEKTKAQLDKLSKK. Positions 476–510 are enriched in acidic residues; that stretch reads ENAEEEEEDEVDEDDEDADEDEEDEEEEDEEEDED. Positions 593 to 604 are enriched in basic and acidic residues; sequence KTKAQLDKLSKK.

The protein belongs to the pescadillo family. As to quaternary structure, component of the NOP7 complex, composed of ERB1, NOP7 and YTM1. The complex is held together by ERB1, which interacts with NOP7 via its N-terminal domain and with YTM1 via a high-affinity interaction between the seven-bladed beta-propeller domains of the 2 proteins. The NOP7 complex associates with the 66S pre-ribosome.

It is found in the nucleus. Its subcellular location is the nucleolus. The protein localises to the nucleoplasm. Its function is as follows. Component of the NOP7 complex, which is required for maturation of the 25S and 5.8S ribosomal RNAs and formation of the 60S ribosome. The sequence is that of Pescadillo homolog from Scheffersomyces stipitis (strain ATCC 58785 / CBS 6054 / NBRC 10063 / NRRL Y-11545) (Yeast).